Here is a 1106-residue protein sequence, read N- to C-terminus: Platelet-derived growth factor receptor beta (1106 aa).

The first 32 residues, 1-32, serve as a signal peptide directing secretion; the sequence is MRLPGAMPALALKGELLLLSLLLLLEPQISQG. Ig-like C2-type domains follow at residues 33-120, 129-210, 214-309, 331-403, and 416-524; these read LVVT…YIFV, PNDA…YRLQ, INVS…INIT, HRSR…HEDA, and PVRV…VIVV. Over 33-532 the chain is Extracellular; the sequence is LVVTPPGPEL…VVPHSLPFKV (500 aa). N-linked (GlcNAc...) asparagine glycosylation is found at Asn-45, Asn-89, and Asn-103. A disulfide bridge links Cys-54 with Cys-100. An intrachain disulfide couples Cys-149 to Cys-190. Asn-215 and Asn-230 each carry an N-linked (GlcNAc...) asparagine glycan. Cys-235 and Cys-291 are disulfide-bonded. Residues Asn-292, Asn-307, Asn-354, Asn-371, Asn-468, and Asn-479 are each glycosylated (N-linked (GlcNAc...) asparagine). Cys-436 and Cys-508 form a disulfide bridge. Residues 533–553 form a helical membrane-spanning segment; that stretch reads VVISAILALVVLTIISLIILI. Topologically, residues 554-1106 are cytoplasmic; it reads MLWQKKPRYE…PRAEAEDSFL (553 aa). Residues Tyr-562, Tyr-579, and Tyr-581 each carry the phosphotyrosine; by autocatalysis modification. One can recognise a Protein kinase domain in the interval 600–962; that stretch reads LVLGRTLGSG…QLVLLLERLL (363 aa). ATP is bound by residues 606-614 and Lys-634; that span reads LGSGAFGQV. A Phosphotyrosine; by ABL1 and ABL2 modification is found at Tyr-686. Phosphotyrosine; by autocatalysis occurs at positions 716, 740, 751, 763, 771, 775, and 778. Asp-826 (proton acceptor) is an active-site residue. Position 857 is a phosphotyrosine; by autocatalysis (Tyr-857). Phosphotyrosine; by ABL1 and ABL2 is present on residues Tyr-934 and Tyr-970. Tyr-1009 and Tyr-1021 each carry phosphotyrosine; by autocatalysis. Residues 1019–1106 are disordered; it reads NDYIIPLPDP…PRAEAEDSFL (88 aa). The span at 1043–1060 shows a compositional bias: polar residues; the sequence is SLASSTLNEVNTSSTISC. The segment covering 1066-1088 has biased composition (acidic residues); the sequence is PQDEPEPEPQLELQVEPEPELEQ.

The protein belongs to the protein kinase superfamily. Tyr protein kinase family. CSF-1/PDGF receptor subfamily. As to quaternary structure, interacts with homodimeric PDGFB and PDGFD, and with heterodimers formed by PDGFA and PDGFB. May also interact with homodimeric PDGFC. Monomer in the absence of bound ligand. Interaction with homodimeric PDGFB, heterodimers formed by PDGFA and PDGFB or homodimeric PDGFD, leads to receptor dimerization, where both PDGFRA homodimers and heterodimers with PDGFRB are observed. Interacts with SH2B2/APS. Interacts directly (tyrosine phosphorylated) with SHB. Interacts (tyrosine phosphorylated) with PIK3R1 and RASA1. Interacts (tyrosine phosphorylated) with CBL. Interacts (tyrosine phosphorylated) with SRC and SRC family kinases. Interacts (tyrosine phosphorylated) with PIK3C2B, maybe indirectly. Interacts (tyrosine phosphorylated) with SHC1, GRB7, GRB10 and NCK1. Interaction with GRB2 is mediated by SHC1. Interacts (via C-terminus) with NHERF1. Post-translationally, autophosphorylated on tyrosine residues upon ligand binding. Autophosphorylation occurs in trans, i.e. one subunit of the dimeric receptor phosphorylates tyrosine residues on the other subunit. Phosphorylation at Tyr-579, and to a lesser degree, at Tyr-581, is important for interaction with SRC family kinases. Phosphorylation at Tyr-740 and Tyr-751 is important for interaction with PIK3R1. Phosphorylation at Tyr-751 is important for interaction with NCK1. Phosphorylation at Tyr-771 and Tyr-857 is important for interaction with RASA1/GAP. Phosphorylation at Tyr-857 is important for efficient phosphorylation of PLCG1 and PTPN11, resulting in increased phosphorylation of AKT1, MAPK1/ERK2 and/or MAPK3/ERK1, PDCD6IP/ALIX and STAM, and in increased cell proliferation. Phosphorylation at Tyr-1009 is important for interaction with PTPN11. Phosphorylation at Tyr-1009 and Tyr-1021 is important for interaction with PLCG1. Phosphorylation at Tyr-1021 is important for interaction with CBL; PLCG1 and CBL compete for the same binding site. Dephosphorylated by PTPRJ at Tyr-751, Tyr-857, Tyr-1009 and Tyr-1021. Dephosphorylated by PTPN2 at Tyr-579 and Tyr-1021. N-glycosylated. In terms of processing, ubiquitinated. After autophosphorylation, the receptor is polyubiquitinated, leading to its degradation.

It is found in the cell membrane. The protein localises to the cytoplasmic vesicle. The protein resides in the lysosome lumen. The catalysed reaction is L-tyrosyl-[protein] + ATP = O-phospho-L-tyrosyl-[protein] + ADP + H(+). With respect to regulation, present in an inactive conformation in the absence of bound ligand. Binding of PDGFB and/or PDGFD leads to dimerization and activation by autophosphorylation on tyrosine residues. Inhibited by imatinib. In terms of biological role, tyrosine-protein kinase that acts as a cell-surface receptor for homodimeric PDGFB and PDGFD and for heterodimers formed by PDGFA and PDGFB, and plays an essential role in the regulation of embryonic development, cell proliferation, survival, differentiation, chemotaxis and migration. Plays an essential role in blood vessel development by promoting proliferation, migration and recruitment of pericytes and smooth muscle cells to endothelial cells. Plays a role in the migration of vascular smooth muscle cells and the formation of neointima at vascular injury sites. Required for normal development of the cardiovascular system. Required for normal recruitment of pericytes (mesangial cells) in the kidney glomerulus, and for normal formation of a branched network of capillaries in kidney glomeruli. Promotes rearrangement of the actin cytoskeleton and the formation of membrane ruffles. Binding of its cognate ligands - homodimeric PDGFB, heterodimers formed by PDGFA and PDGFB or homodimeric PDGFD -leads to the activation of several signaling cascades; the response depends on the nature of the bound ligand and is modulated by the formation of heterodimers between PDGFRA and PDGFRB. Phosphorylates PLCG1, PIK3R1, PTPN11, RASA1/GAP, CBL, SHC1 and NCK1. Activation of PLCG1 leads to the production of the cellular signaling molecules diacylglycerol and inositol 1,4,5-trisphosphate, mobilization of cytosolic Ca(2+) and the activation of protein kinase C. Phosphorylation of PIK3R1, the regulatory subunit of phosphatidylinositol 3-kinase, leads to the activation of the AKT1 signaling pathway. Phosphorylation of SHC1, or of the C-terminus of PTPN11, creates a binding site for GRB2, resulting in the activation of HRAS, RAF1 and down-stream MAP kinases, including MAPK1/ERK2 and/or MAPK3/ERK1. Promotes phosphorylation and activation of SRC family kinases. Promotes phosphorylation of PDCD6IP/ALIX and STAM. Receptor signaling is down-regulated by protein phosphatases that dephosphorylate the receptor and its down-stream effectors, and by rapid internalization of the activated receptor. In Homo sapiens (Human), this protein is Platelet-derived growth factor receptor beta (PDGFRB).